The sequence spans 289 residues: Phosphatidylserine decarboxylase proenzyme (289 aa).

Active-site charge relay system; for autoendoproteolytic cleavage activity residues include aspartate 89, histidine 146, and serine 252. The active-site Schiff-base intermediate with substrate; via pyruvic acid; for decarboxylase activity is serine 252. Serine 252 is subject to Pyruvic acid (Ser); by autocatalysis.

Belongs to the phosphatidylserine decarboxylase family. PSD-B subfamily. Prokaryotic type I sub-subfamily. Heterodimer of a large membrane-associated beta subunit and a small pyruvoyl-containing alpha subunit. Requires pyruvate as cofactor. Is synthesized initially as an inactive proenzyme. Formation of the active enzyme involves a self-maturation process in which the active site pyruvoyl group is generated from an internal serine residue via an autocatalytic post-translational modification. Two non-identical subunits are generated from the proenzyme in this reaction, and the pyruvate is formed at the N-terminus of the alpha chain, which is derived from the carboxyl end of the proenzyme. The autoendoproteolytic cleavage occurs by a canonical serine protease mechanism, in which the side chain hydroxyl group of the serine supplies its oxygen atom to form the C-terminus of the beta chain, while the remainder of the serine residue undergoes an oxidative deamination to produce ammonia and the pyruvoyl prosthetic group on the alpha chain. During this reaction, the Ser that is part of the protease active site of the proenzyme becomes the pyruvoyl prosthetic group, which constitutes an essential element of the active site of the mature decarboxylase.

It is found in the cell membrane. The enzyme catalyses a 1,2-diacyl-sn-glycero-3-phospho-L-serine + H(+) = a 1,2-diacyl-sn-glycero-3-phosphoethanolamine + CO2. Its pathway is phospholipid metabolism; phosphatidylethanolamine biosynthesis; phosphatidylethanolamine from CDP-diacylglycerol: step 2/2. Catalyzes the formation of phosphatidylethanolamine (PtdEtn) from phosphatidylserine (PtdSer). The protein is Phosphatidylserine decarboxylase proenzyme of Shewanella denitrificans (strain OS217 / ATCC BAA-1090 / DSM 15013).